We begin with the raw amino-acid sequence, 147 residues long: Large ribosomal subunit protein uL13 (147 aa).

This sequence belongs to the universal ribosomal protein uL13 family. Part of the 50S ribosomal subunit.

This protein is one of the early assembly proteins of the 50S ribosomal subunit, although it is not seen to bind rRNA by itself. It is important during the early stages of 50S assembly. The protein is Large ribosomal subunit protein uL13 of Arthrobacter sp. (strain FB24).